A 289-amino-acid chain; its full sequence is ATP synthase gamma chain (289 aa).

It belongs to the ATPase gamma chain family. As to quaternary structure, F-type ATPases have 2 components, CF(1) - the catalytic core - and CF(0) - the membrane proton channel. CF(1) has five subunits: alpha(3), beta(3), gamma(1), delta(1), epsilon(1). CF(0) has three main subunits: a, b and c.

It localises to the cell inner membrane. Its function is as follows. Produces ATP from ADP in the presence of a proton gradient across the membrane. The gamma chain is believed to be important in regulating ATPase activity and the flow of protons through the CF(0) complex. The sequence is that of ATP synthase gamma chain from Phocaeicola vulgatus (strain ATCC 8482 / DSM 1447 / JCM 5826 / CCUG 4940 / NBRC 14291 / NCTC 11154) (Bacteroides vulgatus).